An 802-amino-acid polypeptide reads, in one-letter code: Oleate activated transcription factor 3 (802 aa).

Positions 19–47 (CTNCKKRKSKCDRGKPCSNCTRIGIENSC) form a DNA-binding region, zn(2)-C6 fungal-type. The segment covering 749–768 (TSQQDSLASAGTNRTNNIAT) has biased composition (polar residues). A disordered region spans residues 749–779 (TSQQDSLASAGTNRTNNIATNSGSGDDGGNG).

This sequence belongs to the OAF3 family.

It is found in the cytoplasm. The protein resides in the nucleus. Its subcellular location is the mitochondrion. Its function is as follows. Transcriptional inhibitor with a significantly increased number of target genes in response to oleate. This is Oleate activated transcription factor 3 (OAF3) from Vanderwaltozyma polyspora (strain ATCC 22028 / DSM 70294 / BCRC 21397 / CBS 2163 / NBRC 10782 / NRRL Y-8283 / UCD 57-17) (Kluyveromyces polysporus).